A 267-amino-acid chain; its full sequence is Acetyl-coenzyme A carboxylase carboxyl transferase subunit beta, chloroplastic (267 aa).

The 256-residue stretch at 12-267 folds into the CoA carboxyltransferase N-terminal domain; it reads LWKKCDSCNI…TIHMILDLHN (256 aa). Cys16, Cys19, Cys35, and Cys38 together coordinate Zn(2+). A C4-type zinc finger spans residues 16 to 38; that stretch reads CDSCNILISKFDFYKHDKVCPEC.

Belongs to the AccD/PCCB family. Acetyl-CoA carboxylase is a heterohexamer composed of biotin carboxyl carrier protein, biotin carboxylase and 2 subunits each of ACCase subunit alpha and ACCase plastid-coded subunit beta (accD). Zn(2+) is required as a cofactor.

It is found in the plastid. It localises to the chloroplast stroma. It catalyses the reaction N(6)-carboxybiotinyl-L-lysyl-[protein] + acetyl-CoA = N(6)-biotinyl-L-lysyl-[protein] + malonyl-CoA. Its pathway is lipid metabolism; malonyl-CoA biosynthesis; malonyl-CoA from acetyl-CoA: step 1/1. Its function is as follows. Component of the acetyl coenzyme A carboxylase (ACC) complex. Biotin carboxylase (BC) catalyzes the carboxylation of biotin on its carrier protein (BCCP) and then the CO(2) group is transferred by the transcarboxylase to acetyl-CoA to form malonyl-CoA. This is Acetyl-coenzyme A carboxylase carboxyl transferase subunit beta, chloroplastic from Cyanidium caldarium (Red alga).